A 144-amino-acid polypeptide reads, in one-letter code: Large ribosomal subunit protein uL15 (144 aa).

Residues 1–49 (MRLNTLSPAAGAKSAAKRVGRGIGSGLGKTAGRGHKGQKSRSGGGVRVG) are disordered. Residues 21–31 (RGIGSGLGKTA) are compositionally biased toward gly residues.

It belongs to the universal ribosomal protein uL15 family. As to quaternary structure, part of the 50S ribosomal subunit.

Functionally, binds to the 23S rRNA. The protein is Large ribosomal subunit protein uL15 of Shewanella piezotolerans (strain WP3 / JCM 13877).